We begin with the raw amino-acid sequence, 66 residues long: Putative ankyrin repeat protein RF_pd14 (66 aa).

The stretch at 14-66 is one ANK repeat; that stretch reads KLNQKLMRAAATGDIEAVQKLVLRGADIYCRDHQGDTALSLAAGSGYLDILDI.

This chain is Putative ankyrin repeat protein RF_pd14, found in Rickettsia felis (strain ATCC VR-1525 / URRWXCal2) (Rickettsia azadi).